The chain runs to 427 residues: Ceramide Synthase FUM18 (427 aa).

N-linked (GlcNAc...) asparagine glycosylation occurs at N20. Transmembrane regions (helical) follow at residues I38–S58, E131–A151, G173–V193, Y202–Y222, Y250–V270, and V335–I355. Residues R124–D364 enclose the TLC domain. Residues S373–G406 are disordered. N-linked (GlcNAc...) asparagine glycosylation is present at N387.

Belongs to the sphingosine N-acyltransferase family.

The protein localises to the endoplasmic reticulum membrane. The protein operates within mycotoxin biosynthesis. Its function is as follows. Ceramide synthase; part of the gene cluster that mediates the biosynthesis of fumonisins B1 (FB1), B2 (FB2), B3 (FB3), and B4 (FB4), which are carcinogenic mycotoxins. Plays a role in self-protection from FB1 toxicity by contributing to ceramide synthesis. The biosynthesis starts with the FUM1-catalyzed carbon chain assembly from one molecule of acetyl-CoA, eight molecules of malonyl-CoA, and two molecules of methionine (in S-adenosyl form). The C18 polyketide chain is released from the enzyme by a nucleophilic attack of a carbanion, which is derived from R-carbon of alanine by decarboxylation, on the carbonyl carbon of polyketide acyl chain. This step is catalyzed by the pyridoxal 5'-phosphate-dependent aminoacyl transferase FUM8. The resultant 3-keto intermediate is then stereospecifically reduced to a 3-hydroxyl product by reductase FUM13. Subsequent oxidations at C-10 by the cytochrome P450 monooxygenase FUM2, C-14 and C-15 by FUM6, FUM12 or FUM15, tricarballylic esterification of the hydroxyl groups on C-14 and C-15 by acyltransferase FUM14, and C-5 hydroxylation by 2-keto-glutarate-dependent dioxygenase FUM3 furnish the biosynthesis of fumonisins. The tricarballylic moieties are most likely derived from the citric acid cycle, and their addition to the carbon backbone may involve FUM7, FUM10, FUM11 and FUM14. In Gibberella moniliformis (strain M3125 / FGSC 7600) (Maize ear and stalk rot fungus), this protein is Ceramide Synthase FUM18.